Consider the following 357-residue polypeptide: Protein RecA (357 aa).

Residue 79 to 86 (GPESSGKT) coordinates ATP.

Belongs to the RecA family.

Its subcellular location is the cytoplasm. In terms of biological role, can catalyze the hydrolysis of ATP in the presence of single-stranded DNA, the ATP-dependent uptake of single-stranded DNA by duplex DNA, and the ATP-dependent hybridization of homologous single-stranded DNAs. It interacts with LexA causing its activation and leading to its autocatalytic cleavage. The protein is Protein RecA of Chloroherpeton thalassium (strain ATCC 35110 / GB-78).